Here is a 248-residue protein sequence, read N- to C-terminus: tRNA pseudouridine synthase A (248 aa).

Asp53 acts as the Nucleophile in catalysis. Residue Tyr111 participates in substrate binding.

Belongs to the tRNA pseudouridine synthase TruA family. In terms of assembly, homodimer.

It catalyses the reaction uridine(38/39/40) in tRNA = pseudouridine(38/39/40) in tRNA. Functionally, formation of pseudouridine at positions 38, 39 and 40 in the anticodon stem and loop of transfer RNAs. The sequence is that of tRNA pseudouridine synthase A from Listeria welshimeri serovar 6b (strain ATCC 35897 / DSM 20650 / CCUG 15529 / CIP 8149 / NCTC 11857 / SLCC 5334 / V8).